Reading from the N-terminus, the 90-residue chain is Chaplin-G (90 aa).

The N-terminal stretch at 1-27 is a signal peptide; it reads MSRIAKAAGVALGTGAVVLSGTGMAMA. A Chaplin domain is found at 38-78; the sequence is SPGVLSGNVVQVPVHVPVNLCGNTIDVIGLLNPAFGNACEN. Residues Cys58 and Cys76 are joined by a disulfide bond.

The protein belongs to the chaplin family. Short chaplin subfamily.

It is found in the cell surface. The protein resides in the secreted. The protein localises to the cell wall. Its function is as follows. One of 8 partially redundant surface-active proteins required for efficient formation of aerial mycelium; the short chaplins assemble into a hydrophobic, amyloidal fibrillar surface layer that envelopes and protects aerial hyphae and spores, presumably anchored to the long chaplins. Chaplins have an overlapping function with the surface-active SapB peptide; chaplins are essential on minimal medium while on rich medium both chaplins and SapB are required for efficient aerial hyphae formation. Chaplins are also involved in cell attachment to a hydrophobic surface. Forms amyloid fibrils in vitro probably composed of stacked beta-sheets, at low extracellular concentrations individually restores the ability to form aerial hyphae to a chaplin-deficient strain. A small chaplin extract (ChpD, ChpE, ChpF, ChpG and ChpH) self-assembles into 2 different amyloids; small fibrils at the air-water interface form an amphipathic membrane that resembles spore-surface structures involved in aerial hyphae formation, and hydrophilic fibrils in solution that resemble the fibers that attach cells to a hydrophobic surface. At the air-water interface the hydrophilic surface is in contact with water (probably equivalent to the peptidoglycan layer), while the hydrophobic face is exposed to the air, making the surface of the aerial hyphae hydrophobic. A small chaplin extract applied to a chaplin-deficient strain restores aerial hyphae formation. The small chaplin extract forms an amyloid-like structure similar to that seen on the surface of cells without rodlets (rdlA-rdlB deletions), and is highly surface active, reducing surface tension from 72 to 26 mJ/m(2), which probably allows escape of hyphae from an aqueous environment into air. ChpF and ChpG are sufficient to restore the rodlet layer and hydrophobicity to a strain deleted for the other 6 chaplin genes. This chain is Chaplin-G, found in Streptomyces coelicolor (strain ATCC BAA-471 / A3(2) / M145).